The sequence spans 429 residues: FAD-dependent monooxygenase azaH (429 aa).

A helical membrane pass occupies residues Ser5–Leu25. Glu35 and Gly48 together coordinate FAD. N-linked (GlcNAc...) asparagine glycans are attached at residues Asn75 and Asn87. Residue Arg116 participates in FAD binding. Arg199 is an active-site residue. The FAD site is built by Asp315 and Ala328.

This sequence belongs to the paxM FAD-dependent monooxygenase family. Requires FAD as cofactor.

Its subcellular location is the membrane. The protein operates within secondary metabolite biosynthesis. In terms of biological role, FAD-dependent monooxygenase; part of the gene cluster that mediates the biosynthesis of azaphilones, a class of fungal metabolites characterized by a highly oxygenated pyrano-quinone bicyclic core and exhibiting a broad range of bioactivities. In the first step, the non-reducing polyketide synthase azaA forms the hexaketide precursor from successive condensations of five malonyl-CoA units, presumably with a simple acetyl-CoA starter unit. The reactive polyketide chain then undergoes a PT-mediated C2-C7 cyclization to afford the aromatic ring and is eventually released as an aldehyde through the R-domain. The putative ketoreductase azaE is proposed to catalyze the reduction of the terminal ketone resulting in the early culture product FK17-P2a. The monooxygenase azaH was demonstrated to be the only enzyme required to convert FK17-P2a to azanigerone E. AzaH first hydroxylates the benzaldehyde intermediate FK17-P2a at C4, which triggers the formation of the pyran-ring to afford azanigerone E. In parallel, the 2,4-dimethylhexanoyl chain is synthesized by the HR-PKS azaB and is proposed to be transferred to the C4-hydroxyl of azanigerone E by the acyltransferase azaD directly from the ACP domain of azaB. Alternatively, the 2,4-dimethyl-hexanoyl chain may be offloaded from the HR-PKS as a carboxylic acid and converted to an acyl-CoA by azaF. The resulting acyl-CoA molecule could then be taken up as a substrate by AzaD to form azanigerone B. To yield the carboxylic acid substituent in azanigerone A, the hydroxypropyl side chain of azanigerone B would need to undergo a C-C oxidative cleavage catalyzed by cytochrome P450 AzaI. AzaI is proposed to act on a vicinal diol that leads to a C-C bond scission either through an alkoxyradical intermediate or a peroxy complex. In the biosynthesis of azanigerone A, azanigerone B first undergoes hydroxylation at C10, possibly catalyzed by one of the two FAD-dependent monooxygenases encoded in the cluster, azaG or azaL, resulting in the vicinal diol azanigerone C. Oxidative cleavage of azanigerone C by azaI would yield the corresponding aldehyde derivative of azanigerone A. Finally, the dehydrogenase azaJ is proposed to convert the aldehyde functional group into the carboxylic acid, completing the conversion from azanigerone B to azanigerone A. Alternatively, the oxidation of aldehyde to carboxylic acid may be catalyzed by the same P450 enzyme azaI via consecutive oxidation or by endogenous alcohol dehydrogenase. This chain is FAD-dependent monooxygenase azaH, found in Aspergillus niger (strain ATCC 1015 / CBS 113.46 / FGSC A1144 / LSHB Ac4 / NCTC 3858a / NRRL 328 / USDA 3528.7).